A 450-amino-acid polypeptide reads, in one-letter code: UDP-N-acetylmuramoylalanine--D-glutamate ligase (450 aa).

115 to 121 (GTNGKTT) contributes to the ATP binding site.

It belongs to the MurCDEF family.

The protein localises to the cytoplasm. The enzyme catalyses UDP-N-acetyl-alpha-D-muramoyl-L-alanine + D-glutamate + ATP = UDP-N-acetyl-alpha-D-muramoyl-L-alanyl-D-glutamate + ADP + phosphate + H(+). It functions in the pathway cell wall biogenesis; peptidoglycan biosynthesis. Cell wall formation. Catalyzes the addition of glutamate to the nucleotide precursor UDP-N-acetylmuramoyl-L-alanine (UMA). The protein is UDP-N-acetylmuramoylalanine--D-glutamate ligase of Lachnospira eligens (strain ATCC 27750 / DSM 3376 / VPI C15-48 / C15-B4) (Eubacterium eligens).